An 805-amino-acid polypeptide reads, in one-letter code: N-(5-amino-5-carboxypentanoyl)-L-cysteinyl-D-valine synthase (805 aa).

A disordered region spans residues 783–805 (PDTGGGAVGSTTTGGVRGELREI).

Belongs to the ATP-dependent AMP-binding enzyme family. Requires pantetheine 4'-phosphate as cofactor.

The enzyme catalyses L-2-aminoadipate + L-valine + L-cysteine + 3 ATP + H2O = N-[(5S)-5-amino-5-carboxypentanoyl]-L-cysteinyl-D-valine + 3 AMP + 3 diphosphate + 3 H(+). The protein operates within antibiotic biosynthesis; penicillin G biosynthesis; penicillin G from L-alpha-aminoadipate and L-cysteine and L-valine: step 1/3. Functionally, each of the constituent amino acids of ACV are activated as aminoacyl-adenylates with peptide bonds formed through the participation of amino acid thioester intermediates. In Streptomyces clavuligerus, this protein is N-(5-amino-5-carboxypentanoyl)-L-cysteinyl-D-valine synthase (pcbAB).